We begin with the raw amino-acid sequence, 348 residues long: Probable dual-specificity RNA methyltransferase RlmN (348 aa).

E93 functions as the Proton acceptor in the catalytic mechanism. The 235-residue stretch at 99 to 333 (TEKRLTACLS…VSLRKSRGSD (235 aa)) folds into the Radical SAM core domain. A disulfide bond links C106 and C338. 3 residues coordinate [4Fe-4S] cluster: C113, C117, and C120. Residues 160–161 (GE), S190, 219–221 (SLH), and N295 each bind S-adenosyl-L-methionine. C338 acts as the S-methylcysteine intermediate in catalysis.

Belongs to the radical SAM superfamily. RlmN family. It depends on [4Fe-4S] cluster as a cofactor.

The protein localises to the cytoplasm. It carries out the reaction adenosine(2503) in 23S rRNA + 2 reduced [2Fe-2S]-[ferredoxin] + 2 S-adenosyl-L-methionine = 2-methyladenosine(2503) in 23S rRNA + 5'-deoxyadenosine + L-methionine + 2 oxidized [2Fe-2S]-[ferredoxin] + S-adenosyl-L-homocysteine. It catalyses the reaction adenosine(37) in tRNA + 2 reduced [2Fe-2S]-[ferredoxin] + 2 S-adenosyl-L-methionine = 2-methyladenosine(37) in tRNA + 5'-deoxyadenosine + L-methionine + 2 oxidized [2Fe-2S]-[ferredoxin] + S-adenosyl-L-homocysteine. In terms of biological role, specifically methylates position 2 of adenine 2503 in 23S rRNA and position 2 of adenine 37 in tRNAs. The protein is Probable dual-specificity RNA methyltransferase RlmN of Prochlorococcus marinus (strain MIT 9515).